A 370-amino-acid chain; its full sequence is tRNA-specific 2-thiouridylase MnmA (370 aa).

ATP-binding positions include 7–14 (ALSGGVDS) and Met-34. Positions 104–106 (NPD) are interaction with target base in tRNA. Cys-109 (nucleophile) is an active-site residue. A disulfide bridge links Cys-109 with Cys-202. An ATP-binding site is contributed by Gly-134. The tract at residues 152-154 (KDQ) is interaction with tRNA. Cys-202 (cysteine persulfide intermediate) is an active-site residue. Residues 308 to 309 (RY) are interaction with tRNA.

This sequence belongs to the MnmA/TRMU family.

Its subcellular location is the cytoplasm. The catalysed reaction is S-sulfanyl-L-cysteinyl-[protein] + uridine(34) in tRNA + AH2 + ATP = 2-thiouridine(34) in tRNA + L-cysteinyl-[protein] + A + AMP + diphosphate + H(+). Catalyzes the 2-thiolation of uridine at the wobble position (U34) of tRNA, leading to the formation of s(2)U34. The polypeptide is tRNA-specific 2-thiouridylase MnmA (Mycoplasma mobile (strain ATCC 43663 / 163K / NCTC 11711) (Mesomycoplasma mobile)).